Here is a 229-residue protein sequence, read N- to C-terminus: MSDFVLELDAIERTYVTEAGELPVLRGASLSLAPGEIVGLVGPSGSGKSSLLHAAGLLERPDAGEVRVRGQATRDLDDRARTAIRRRDIGFVYQFHHLLPEFDALENIVLPQLIAGVPSARARQRAEELLTRLGLAERLLHQPSQLSGGEQQRVAIARALANAPHVLLADEPTGNLDPDTSDTVFAAFRDTVRAEGAAALVATHNHELAGRMDRILTFADGHLTPYVPA.

The ABC transporter domain occupies 6–229 (LELDAIERTY…DGHLTPYVPA (224 aa)). 42 to 49 (GPSGSGKS) provides a ligand contact to ATP.

This sequence belongs to the ABC transporter superfamily. Lipoprotein translocase (TC 3.A.1.125) family. The complex is composed of two ATP-binding proteins (LolD) and two transmembrane proteins (LolC and LolE).

The protein localises to the cell inner membrane. Functionally, part of the ABC transporter complex LolCDE involved in the translocation of mature outer membrane-directed lipoproteins, from the inner membrane to the periplasmic chaperone, LolA. Responsible for the formation of the LolA-lipoprotein complex in an ATP-dependent manner. The polypeptide is Lipoprotein-releasing system ATP-binding protein LolD (Maricaulis maris (strain MCS10) (Caulobacter maris)).